A 142-amino-acid polypeptide reads, in one-letter code: Ribosome-binding factor A (142 aa).

The tract at residues 120 to 142 (TLGEVQSESDQPTTYETTTVNKT) is disordered. The segment covering 123–142 (EVQSESDQPTTYETTTVNKT) has biased composition (polar residues).

This sequence belongs to the RbfA family. Monomer. Binds 30S ribosomal subunits, but not 50S ribosomal subunits or 70S ribosomes.

It localises to the cytoplasm. Functionally, one of several proteins that assist in the late maturation steps of the functional core of the 30S ribosomal subunit. Associates with free 30S ribosomal subunits (but not with 30S subunits that are part of 70S ribosomes or polysomes). Required for efficient processing of 16S rRNA. May interact with the 5'-terminal helix region of 16S rRNA. This is Ribosome-binding factor A from Prochlorococcus marinus (strain MIT 9313).